The following is a 495-amino-acid chain: MDLLCTRPGCARLNSFPDLDNRNTLQTVQQRFCTSCRMPLILAGRYLPVKLLGQGGFGAAYLALDRFTPTMRFCVVKQFQPSGNLNQEQLDLALSLFEREAVVLEKLGNRHDQIPDLFAYFPLLVDDPRTGKQDQFFYLVQEFINGQDLEKTVEKHGPLSEAEVRWVLTEMLKILSFVHGTGAIHRDIKPSNLMRDQEGKLYLLDFGAVKQATAGVGASNEGSTGIYSMGFAPPEQMAGNQVYPATDLYALAVTCLYLLTGKTAQDLYDAYHNQWNWRSPGLKVSQPLADVIDRLLLPTPKDRYASAEEVLAVLNGGKGNQGKAPPGATVSTPQGTNTQIQPTPASSASPLTAPKTPGKISQAVQNLPVLKVLFQGALTGSALVFWGIIAVSLFPQTNISLGILGMVVAGIILAQFKRWLEVTEMLSLNTLTILALLAVPGLSRWPKIVELATQLDFPVLVTVIIAAIAGAIAVVATIALFLLILKLLFAVLTRV.

One can recognise a Protein kinase domain in the interval 46–314 (YLPVKLLGQG…ASAEEVLAVL (269 aa)). ATP is bound by residues 52-60 (LGQGGFGAA) and Lys-77. The Proton acceptor role is filled by Asp-187. Residues 316–354 (GGKGNQGKAPPGATVSTPQGTNTQIQPTPASSASPLTAP) form a disordered region. Polar residues predominate over residues 329 to 350 (TVSTPQGTNTQIQPTPASSASP).

It belongs to the protein kinase superfamily. Ser/Thr protein kinase family.

It carries out the reaction L-seryl-[protein] + ATP = O-phospho-L-seryl-[protein] + ADP + H(+). The enzyme catalyses L-threonyl-[protein] + ATP = O-phospho-L-threonyl-[protein] + ADP + H(+). The sequence is that of Serine/threonine-protein kinase F (spkF) from Synechocystis sp. (strain ATCC 27184 / PCC 6803 / Kazusa).